The primary structure comprises 93 residues: Translation initiation factor IF-1 (93 aa).

The region spanning 1-72 (MAKEELIQFE…EKGRLIFRHK (72 aa)) is the S1-like domain. The tract at residues 69-93 (FRHKDERPSGAPRGGPPRGGQFRRR) is disordered.

This sequence belongs to the IF-1 family. As to quaternary structure, component of the 30S ribosomal translation pre-initiation complex which assembles on the 30S ribosome in the order IF-2 and IF-3, IF-1 and N-formylmethionyl-tRNA(fMet); mRNA recruitment can occur at any time during PIC assembly.

The protein resides in the cytoplasm. Functionally, one of the essential components for the initiation of protein synthesis. Stabilizes the binding of IF-2 and IF-3 on the 30S subunit to which N-formylmethionyl-tRNA(fMet) subsequently binds. Helps modulate mRNA selection, yielding the 30S pre-initiation complex (PIC). Upon addition of the 50S ribosomal subunit IF-1, IF-2 and IF-3 are released leaving the mature 70S translation initiation complex. The chain is Translation initiation factor IF-1 from Nitrobacter hamburgensis (strain DSM 10229 / NCIMB 13809 / X14).